A 406-amino-acid chain; its full sequence is GTPase Obg (406 aa).

The Obg domain maps to 1–159; the sequence is MKFVDEVSIH…RDLKLELKVL (159 aa). Positions 127-148 are disordered; sequence NTRFKSSTNRAPRQTTPGKPGE. Residues 129–143 are compositionally biased toward polar residues; the sequence is RFKSSTNRAPRQTTP. The OBG-type G domain maps to 160–334; that stretch reads ADVGLLGLPN…LSQDIMRYLD (175 aa). Residues 166–173, 191–195, 213–216, 283–286, and 315–317 each bind GTP; these read GLPNAGKS, FTTLV, DIPG, NKMD, and SAL. 2 residues coordinate Mg(2+): Ser-173 and Thr-193. The interval 378–406 is disordered; sequence GLKNAGAADDDDFDDEEDDGDGPEIFYVP. The span at 385-399 shows a compositional bias: acidic residues; the sequence is ADDDDFDDEEDDGDG.

It belongs to the TRAFAC class OBG-HflX-like GTPase superfamily. OBG GTPase family. Monomer. Mg(2+) is required as a cofactor.

The protein resides in the cytoplasm. Functionally, an essential GTPase which binds GTP, GDP and possibly (p)ppGpp with moderate affinity, with high nucleotide exchange rates and a fairly low GTP hydrolysis rate. Plays a role in control of the cell cycle, stress response, ribosome biogenesis and in those bacteria that undergo differentiation, in morphogenesis control. The sequence is that of GTPase Obg from Pseudomonas paraeruginosa (strain DSM 24068 / PA7) (Pseudomonas aeruginosa (strain PA7)).